The sequence spans 225 residues: Ribonuclease HII (225 aa).

Residues 35 to 225 enclose the RNase H type-2 domain; the sequence is GLVAGVDEVG…SFRPCQISLD (191 aa). Residues Asp41, Glu42, and Asp137 each contribute to the a divalent metal cation site.

The protein belongs to the RNase HII family. Requires Mn(2+) as cofactor. It depends on Mg(2+) as a cofactor.

The protein localises to the cytoplasm. The enzyme catalyses Endonucleolytic cleavage to 5'-phosphomonoester.. In terms of biological role, endonuclease that specifically degrades the RNA of RNA-DNA hybrids. The polypeptide is Ribonuclease HII (Trichormus variabilis (strain ATCC 29413 / PCC 7937) (Anabaena variabilis)).